The sequence spans 594 residues: MMFMLILMSCSHWTITTQPLAAPWLIPRYLPPLHLHCEGPLQPLSRVVLMCLCILGLILNHPLFLVWGPSFLWLHRCHPLFTYLGGIIIYCQVISCGLNDVNVSTISLQMALWRPNESKVYLPPTPVSKVISTDVYVTRTNVYYHGGSSRLLTVGHPYYSIKKGSNNRLAVPKVSGYQYRVFHVKLPDPNKFGLPDADLYDPDTQRLLWACVGVEVGRGQPLGVGVSGHPYYNRQDDTENAHTLDSAEDGRENISMDYKQTQLFILGCKPSIGEHWSKGTTCNGSSAAGDCPPLQFTNSTIEDGDMVETGFGALDFATLQSNRSDVPLDICTNVCKYPDYLKMAAEPYGDSMFFSLRREQMFTRHFFNRAGKMGDTIPDELYIKSTTISDPGSHVYTSTPSGSMVSSEQQLFNKPYWLRRAQGHNNGMCWGNRIFLTVVDTTRSTNVSLCAAEVSDNTNYKATNFKEYLRHMEEYDLQFIFQLCKITLTPEIMAYIHNMDPQLLEDWNFGVPPPPSASLQDTYRYLQSQAITCQKPTPPKTPTDPYANMTFWDVDLRESFSMDLDQFPLGRKFLLQRGTTPTVSRKRTAVGRGH.

Belongs to the papillomaviridae L1 protein family. In terms of assembly, self-assembles into homopentamers. The capsid has an icosahedral symmetry and consists of 72 capsomers, with each capsomer being a pentamer of L1. Interacts with the minor capsid protein L2; this interaction is necessary for viral genome encapsidation. Interacts with protein L1; this interaction enhances E2-dependent replication and transcription activation.

Its subcellular location is the virion. It localises to the host nucleus. Functionally, forms an icosahedral capsid with a T=7 symmetry and a 50 nm diameter. The capsid is composed of 72 pentamers linked to each other by disulfide bonds and associated with L2 proteins. Binds to heparan sulfate proteoglycans on cell surface of basal layer keratinocytes to provide initial virion attachment. This binding mediates a conformational change in the virus capsid that facilitates efficient infection. The virion enters the host cell via endocytosis. During virus trafficking, L1 protein dissociates from the viral DNA and the genomic DNA is released to the host nucleus. The virion assembly takes place within the cell nucleus. Encapsulates the genomic DNA together with protein L2. The polypeptide is Major capsid protein L1 (Homo sapiens (Human)).